The following is a 317-amino-acid chain: Metaxin-1 (317 aa).

Glycyl lysine isopeptide (Lys-Gly) (interchain with G-Cter in ubiquitin) cross-links involve residues Lys-38, Lys-41, Lys-78, and Lys-168. A helical membrane pass occupies residues 272–292; sequence ILSVLAGLAAMVGYALLSGIV.

It belongs to the metaxin family. Interacts with MTX2/metaxin-2. Associates with the mitochondrial contact site and cristae organizing system (MICOS) complex, composed of at least MICOS10/MIC10, CHCHD3/MIC19, CHCHD6/MIC25, APOOL/MIC27, IMMT/MIC60, APOO/MIC23/MIC26 and QIL1/MIC13. This complex was also known under the names MINOS or MitOS complex. The MICOS complex associates with mitochondrial outer membrane proteins SAMM50, MTX1 and MTX2 (together described as components of the mitochondrial outer membrane sorting assembly machinery (SAM) complex) and DNAJC11, mitochondrial inner membrane protein TMEM11 and with HSPA9. The MICOS and SAM complexes together with DNAJC11 are part of a large protein complex spanning both membranes termed the mitochondrial intermembrane space bridging (MIB) complex. Interacts with ARMC1. Post-translationally, ubiquitinated by PRKN during mitophagy, leading to its degradation and enhancement of mitophagy. Deubiquitinated by USP30. As to expression, ubiquitous. Higher levels are seen in the kidney as compared to other tissues.

Its subcellular location is the mitochondrion outer membrane. Its function is as follows. Involved in transport of proteins into the mitochondrion. Essential for embryonic development. The chain is Metaxin-1 (Mtx1) from Mus musculus (Mouse).